The following is a 1161-amino-acid chain: Voltage-gated inwardly rectifying potassium channel KCNH2 (1161 aa).

The Cytoplasmic portion of the chain corresponds to 1 to 405 (MPVRRGHVAP…RIHRWTILHY (405 aa)). The PAS domain maps to 17–88 (TIIRKFEGQS…AAQIAQALLG (72 aa)). In terms of domain architecture, PAC spans 92–144 (RKVEIAFYRKDGSCFLCLVDVVPVKNEDGAVIMFILNFEVVMEKDMVGSPARD). A disordered region spans residues 233 to 286 (ALVGSCSPPPPVSAPGPHPSLRAHSLNPDASGSSCSLARTRSRESCASVRRASS). Phosphoserine is present on residues serine 239 and serine 245. Residues 239 to 250 (SPPPPVSAPGPH) are compositionally biased toward pro residues. Polar residues predominate over residues 260 to 271 (PDASGSSCSLAR). 4 positions are modified to phosphoserine: serine 285, serine 286, serine 322, and serine 353. A helical membrane pass occupies residues 406-426 (SPFKAVWDWLILLLVIYTAVF). Residues 427–452 (TPYSAAFLLKETEEGPPAPECGYACQ) lie on the Extracellular side of the membrane. Residues 453 to 473 (PLAVVDLIVDIMFIVDILINF) form a helical membrane-spanning segment. The Cytoplasmic portion of the chain corresponds to 474 to 497 (RTTYVNANEEVVSHPGRIAVHYFK). Residues 498–518 (GWFLIDMVAAIPFDLLIFGSG) form a helical membrane-spanning segment. Residues 519 to 522 (SEEL) are Extracellular-facing. Residues 523–543 (IGLLKTARLLRLVRVARKLDR) traverse the membrane as a helical; Voltage-sensor segment. Residues 544 to 549 (YSEYGA) are Cytoplasmic-facing. Residues 550 to 570 (AVLLLLMCTFALIAHWLACIW) form a helical membrane-spanning segment. The Extracellular segment spans residues 571–613 (YAIGNMEQPHMDSRIGWLHNLGDQMGKPYNSSGLGGPSIKDKY). Residue asparagine 600 is glycosylated (N-linked (GlcNAc...) asparagine). An intramembrane region (pore-forming) is located at residues 614 to 634 (VTGLYFTFSSLTSVGFGNVSP). Positions 626–631 (SVGFGN) match the Selectivity filter motif. The Extracellular segment spans residues 635 to 640 (NTNSEK). A helical transmembrane segment spans residues 641–661 (IFSICVMLIGSLMYASIFGNV). The Cytoplasmic portion of the chain corresponds to 662 to 1161 (SAIIQRLYSG…LHRHGSDPGS (500 aa)). Positions 744 to 844 (PFRGATKDCL…IHRDDLLEVL (101 aa)) are cNMP-binding domain. Residues 872–985 (GSPGSTEWEG…TEDCEKSSDT (114 aa)) form a disordered region. Phosphoserine occurs at positions 873 and 876. Over residues 885-894 (RQRKRKLSFR) the composition is skewed to basic residues. Low complexity predominate over residues 930 to 941 (GESPSSGPSSPE). Residues 962–972 (SPRPPGEPPGG) show a composition bias toward pro residues. Position 1016 is an omega-N-methylarginine (arginine 1016). A coiled-coil region spans residues 1037–1064 (RGDVESRLDALQRQLNRLETRLSADMAT). Residues 1121–1161 (ELPPGAPELPQEGPTRRLSLPGQLGALTSQPLHRHGSDPGS) form a disordered region. Serine 1139 carries the post-translational modification Phosphoserine.

The protein belongs to the potassium channel family. H (Eag) (TC 1.A.1.20) subfamily. Kv11.1/KCNH2 sub-subfamily. The potassium channel is probably composed of a homo- or heterotetrameric complex of pore-forming alpha subunits that can associate with modulating beta subunits. Interacts with DNAJB12 and DNAJB14; chaperones DNAJB12 and DNAJB14 promote tetramerization. Heteromultimer with KCNH6/ERG2 and KCNH7/ERG3. Interacts with ALG10B. Forms a stable complex with KCNE1 or KCNE2, and that this heteromultimerization regulates Inward rectifier potassium channel activity. Interacts with CANX. The core-glycosylated, but not the fully glycosylated form interacts with RNF207. Interacts with NDFIP1 and NDFIP2; this interaction decreases the cell membrane expression by targeting KCNH2, through interaction with NEDD4L, for the degradation through the multivesicular bodies (MVBs)-lysosomal pathway. Post-translationally, phosphorylated on serine and threonine residues. Phosphorylation by PKA inhibits ion conduction. In terms of tissue distribution, detected in heart, both in atrium and in left ventricle.

Its subcellular location is the cell membrane. It catalyses the reaction K(+)(in) = K(+)(out). Functionally, pore-forming (alpha) subunit of voltage-gated inwardly rectifying potassium channel. Characterized by unusual gating kinetics by producing relatively small outward currents during membrane depolarization and large inward currents during subsequent repolarization which reflect a rapid inactivation during depolarization and quick recovery from inactivation but slow deactivation (closing) during repolarization. Channel properties are modulated by cAMP and subunit assembly. Forms a stable complex with KCNE1 or KCNE2, and that this heteromultimerization regulates inward rectifier potassium channel activity. The polypeptide is Voltage-gated inwardly rectifying potassium channel KCNH2 (Oryctolagus cuniculus (Rabbit)).